The sequence spans 61 residues: Photosystem II reaction center protein K (61 aa).

Residues 1-24 (MLNIFSLISICLNSALYSSSFFFG) constitute a propeptide that is removed on maturation. The helical transmembrane segment at 40–60 (MPVIPVFFFLLAFVWQAAVSF) threads the bilayer.

It belongs to the PsbK family. In terms of assembly, PSII is composed of 1 copy each of membrane proteins PsbA, PsbB, PsbC, PsbD, PsbE, PsbF, PsbH, PsbI, PsbJ, PsbK, PsbL, PsbM, PsbT, PsbX, PsbY, PsbZ, Psb30/Ycf12, at least 3 peripheral proteins of the oxygen-evolving complex and a large number of cofactors. It forms dimeric complexes.

It localises to the plastid. The protein localises to the chloroplast thylakoid membrane. Its function is as follows. One of the components of the core complex of photosystem II (PSII). PSII is a light-driven water:plastoquinone oxidoreductase that uses light energy to abstract electrons from H(2)O, generating O(2) and a proton gradient subsequently used for ATP formation. It consists of a core antenna complex that captures photons, and an electron transfer chain that converts photonic excitation into a charge separation. In Jasminum nudiflorum (Winter jasmine), this protein is Photosystem II reaction center protein K.